Here is a 341-residue protein sequence, read N- to C-terminus: tRNA N6-adenosine threonylcarbamoyltransferase (341 aa).

Fe cation-binding residues include histidine 111 and histidine 115. Residues 134-138 (LVSGG), aspartate 167, glycine 180, and asparagine 276 contribute to the substrate site. Residue aspartate 304 participates in Fe cation binding.

Belongs to the KAE1 / TsaD family. Fe(2+) is required as a cofactor.

It is found in the cytoplasm. It catalyses the reaction L-threonylcarbamoyladenylate + adenosine(37) in tRNA = N(6)-L-threonylcarbamoyladenosine(37) in tRNA + AMP + H(+). Functionally, required for the formation of a threonylcarbamoyl group on adenosine at position 37 (t(6)A37) in tRNAs that read codons beginning with adenine. Is involved in the transfer of the threonylcarbamoyl moiety of threonylcarbamoyl-AMP (TC-AMP) to the N6 group of A37, together with TsaE and TsaB. TsaD likely plays a direct catalytic role in this reaction. This chain is tRNA N6-adenosine threonylcarbamoyltransferase, found in Pseudomonas syringae pv. syringae (strain B728a).